The following is a 1358-amino-acid chain: MSYSYAEKKRIRKEFGVLPHILDVPYLLSIQTESYRKFLNADDAKGRLHSGLELVLKQSFPVESKNGQYELHYVDYQIGEPTFDETECQVRGATYDAPLNVKLRLVVYNKEALPSEKVVEDIREEYVYMGDIPLMTTNGTFIINGTERVVVSQLHRSPGVFFSKDDSEEGAFSARIIPYRGSWLDFEFDSKGIIWARIDRKRKFCATVILKALGYTQEEILNRFSDSKTISFNNKGFALKLDDLSSMKGEVLKFDIIDEKDNTIVKKNKKLTSRDIKKIKDAGVDSVAIDFDLVSTLRVAKDIVNEATGEVIAYANDDVTENLLEACVEAGMLELEVIDFITTERGRYISDTLKYDLTKNTDEALVEIYKVLRPGDPPAAASVKALFEGLFFIESRYSLSDIGRMKLNARLGSDNVSKDIYTLENSDIVGVIEELINIRDGKGKVDDIDHLGNRRVRSVGEMVENQFRIGLYRVEKGIRESMSLVHKDKLMPKDIVNSKPITAAIKEFFTSGALSQFMDQDNPLSEVTHKRRISALGPGGLSRDRAGFEVRDVHATHYGRLCPIETPEGPNIGLINSLASYARVNDYGFLEAPYRKVVNGKVTNEIEYLSAIDEDHYVIAQASTKLDKNNHFVEDLIQCRSGGEAIFTESSRVQYMDVSAKQMVSAAAALIPFLEHDDANRVLMGANMQRQAVPTLKSEKPLVGTGMEKIVARDSGNCIIARNAGEIAEVDSNRIVVKVDTEKSKTSKLVDIYSLTKFKRSNKNTCINQRPIVNVGDKIEAGDILADGFATDFGELSLGHNLMVAFMPWNGYNFEDSILLSERIVKDDKYTSIHIEEFTCVARDTKLGPEEVTADIPNVSESSLAKLDESGIVHIGANVEAGDILVAKITPKAEQQLTPEERLLRAIFNEKASNVADSSLRMPSGTSGTVINVQVFENDKGGKSKRALKIEKELIDKARKDFDEEFAVIESVVKSSIETDVIGAKIQKAKGLKKGAVLTKEFLATLPFSKWLEISFEDEKLEQKVQNAREYYEEAKIAVDARFEAKKKSIMQSNELSPGVLKTVKVFVAIKKRIQPGDKMAGRHGNKGVVSRVLPVEDMPYMEDGTPVDVCLNPLGIPSRMNIGQILEAHLGLASYGLGKKIEQTLEKTRKAAELRKTLEEVYNSVGDKKVDLKALNDEEILNLCENLKGGVPIATPVFDGAKEEDIKSLLKIGGFATNGQMKLFDGRTGKPFDRHVTVGYMYMLKLDHLVDDKMHARSTGSYSLVTQQPLGGKAQFGGQRFGEMEVWALQAYGAAYTLREMLTVKSDDITGRSKMYKNIVDGKLTMNVDVPESFNVLRNEVRALGIDMDFDYSSEEE.

This sequence belongs to the RNA polymerase beta chain family. The RNAP catalytic core consists of 2 alpha, 1 beta, 1 beta' and 1 omega subunit. When a sigma factor is associated with the core the holoenzyme is formed, which can initiate transcription.

It catalyses the reaction RNA(n) + a ribonucleoside 5'-triphosphate = RNA(n+1) + diphosphate. DNA-dependent RNA polymerase catalyzes the transcription of DNA into RNA using the four ribonucleoside triphosphates as substrates. The protein is DNA-directed RNA polymerase subunit beta of Francisella philomiragia subsp. philomiragia (strain ATCC 25017 / CCUG 19701 / FSC 153 / O#319-036).